Here is a 203-residue protein sequence, read N- to C-terminus: MTEKLKGTTTVGIVCKDGVVLAADRRASLGNMVLSERVTKVFQIDDHLAIAGAGTVGDILSLVRLLRAEAKLYRAKVSREMSVKALATLTSNILHSGRGFAYMAWFLVGGYDSAPRLYSIDAAGGVTEDRFTAAGSGMEFAFSVLEENYRDGIPLEEGVKLALRAIKAATKRDVFTGGGVTLVTITEEGYREWSEEELKSLLE.

The propeptide at 1 to 7 (MTEKLKG) is removed in mature form; by autocatalysis. The Nucleophile role is filled by Thr8.

This sequence belongs to the peptidase T1B family. The 20S proteasome core is composed of 14 alpha and 14 beta subunits that assemble into four stacked heptameric rings, resulting in a barrel-shaped structure. The two inner rings, each composed of seven catalytic beta subunits, are sandwiched by two outer rings, each composed of seven alpha subunits. The catalytic chamber with the active sites is on the inside of the barrel. Has a gated structure, the ends of the cylinder being occluded by the N-termini of the alpha-subunits. Is capped at one or both ends by the proteasome regulatory ATPase, PAN.

It localises to the cytoplasm. The enzyme catalyses Cleavage of peptide bonds with very broad specificity.. With respect to regulation, the formation of the proteasomal ATPase PAN-20S proteasome complex, via the docking of the C-termini of PAN into the intersubunit pockets in the alpha-rings, triggers opening of the gate for substrate entry. Interconversion between the open-gate and close-gate conformations leads to a dynamic regulation of the 20S proteasome proteolysis activity. Its function is as follows. Component of the proteasome core, a large protease complex with broad specificity involved in protein degradation. The sequence is that of Proteasome subunit beta 1 from Thermococcus kodakarensis (strain ATCC BAA-918 / JCM 12380 / KOD1) (Pyrococcus kodakaraensis (strain KOD1)).